Reading from the N-terminus, the 256-residue chain is Probable enoyl-CoA hydratase echA14 (256 aa).

The segment at 235 to 256 (GPQAKSVQSPEFAARLAAAQHR) is disordered.

Belongs to the enoyl-CoA hydratase/isomerase family.

The enzyme catalyses a (3S)-3-hydroxyacyl-CoA = a (2E)-enoyl-CoA + H2O. The catalysed reaction is a 4-saturated-(3S)-3-hydroxyacyl-CoA = a (3E)-enoyl-CoA + H2O. In terms of biological role, could possibly oxidize fatty acids using specific components. In Mycobacterium tuberculosis (strain CDC 1551 / Oshkosh), this protein is Probable enoyl-CoA hydratase echA14 (echA14).